Here is a 180-residue protein sequence, read N- to C-terminus: Large ribosomal subunit protein uL5 (180 aa).

Belongs to the universal ribosomal protein uL5 family. In terms of assembly, part of the 50S ribosomal subunit; part of the 5S rRNA/L5/L18/L25 subcomplex. Contacts the 5S rRNA and the P site tRNA. Forms a bridge to the 30S subunit in the 70S ribosome.

In terms of biological role, this is one of the proteins that bind and probably mediate the attachment of the 5S RNA into the large ribosomal subunit, where it forms part of the central protuberance. In the 70S ribosome it contacts protein S13 of the 30S subunit (bridge B1b), connecting the 2 subunits; this bridge is implicated in subunit movement. Contacts the P site tRNA; the 5S rRNA and some of its associated proteins might help stabilize positioning of ribosome-bound tRNAs. In Chlamydia felis (strain Fe/C-56) (Chlamydophila felis), this protein is Large ribosomal subunit protein uL5.